Here is a 325-residue protein sequence, read N- to C-terminus: Anthranilate phosphoribosyltransferase (325 aa).

Residues Gly-73, 76–77 (GD), Thr-81, 83–86 (NIST), 100–108 (KHGNVSITS), and Ser-112 each bind 5-phospho-alpha-D-ribose 1-diphosphate. Residue Gly-73 coordinates anthranilate. Ser-85 lines the Mg(2+) pocket. Asn-103 is an anthranilate binding site. Arg-158 is a binding site for anthranilate. 2 residues coordinate Mg(2+): Asp-216 and Glu-217.

Belongs to the anthranilate phosphoribosyltransferase family. In terms of assembly, homodimer. The cofactor is Mg(2+).

The enzyme catalyses N-(5-phospho-beta-D-ribosyl)anthranilate + diphosphate = 5-phospho-alpha-D-ribose 1-diphosphate + anthranilate. The protein operates within amino-acid biosynthesis; L-tryptophan biosynthesis; L-tryptophan from chorismate: step 2/5. Functionally, catalyzes the transfer of the phosphoribosyl group of 5-phosphorylribose-1-pyrophosphate (PRPP) to anthranilate to yield N-(5'-phosphoribosyl)-anthranilate (PRA). This chain is Anthranilate phosphoribosyltransferase, found in Methanococcus aeolicus (strain ATCC BAA-1280 / DSM 17508 / OCM 812 / Nankai-3).